A 132-amino-acid polypeptide reads, in one-letter code: Small ribosomal subunit protein uS8 (132 aa).

The protein belongs to the universal ribosomal protein uS8 family. As to quaternary structure, part of the 30S ribosomal subunit. Contacts proteins S5 and S12.

One of the primary rRNA binding proteins, it binds directly to 16S rRNA central domain where it helps coordinate assembly of the platform of the 30S subunit. The sequence is that of Small ribosomal subunit protein uS8 from Anoxybacillus flavithermus (strain DSM 21510 / WK1).